The sequence spans 551 residues: Alkaline nuclease (551 aa).

It belongs to the herpesviridae alkaline nuclease family. Interacts with major DNA-binding protein; this interaction increases the nuclease processivity of the alkaline exonuclease.

It localises to the host nucleus. Its subcellular location is the host cytoplasm. Functionally, plays a role in processing non linear or branched viral DNA intermediates in order to promote the production of mature packaged unit-length linear progeny viral DNA molecules. Exhibits endonuclease and exonuclease activities and accepts both double-stranded and single-stranded DNA as substrate. Exonuclease digestion of DNA is in the 5'-&gt; 3' direction and the products are 5'-monophosphate nucleosides. Additionally, forms a recombinase with the major DNA-binding protein, which displays strand exchange activity. The chain is Alkaline nuclease from Homo sapiens (Human).